Here is a 185-residue protein sequence, read N- to C-terminus: Dense granule protein 2 (185 aa).

Residues 1–23 form the signal peptide; it reads MFAVKHCLLVVAVGALVNVSVRA. Asn-18 is a glycosylation site (N-linked (GlcNAc...) asparagine). Disordered stretches follow at residues 41 to 75 and 142 to 185; these read GKPL…SQRA and ANVE…DFSQ. The span at 43–66 shows a compositional bias: basic and acidic residues; sequence PLDERAVGGKGEHTPPLPDERQQE.

May also be O-glycosylated. In terms of processing, the N-terminus is blocked.

The protein resides in the parasitophorous vacuole. Its function is as follows. Major granular component involved in excreted-secreted antigen (ESA) immunity. Possibly acts in conjunction with GRA1. In Toxoplasma gondii, this protein is Dense granule protein 2 (GRA2).